Reading from the N-terminus, the 139-residue chain is DNA-directed RNA polymerase II subunit Rpb4 (139 aa).

It belongs to the eukaryotic RPB4 RNA polymerase subunit family. RNA polymerase II consists of 12 different subunits.

It is found in the nucleus. It localises to the chromosome. Functionally, DNA-dependent RNA polymerase catalyzes the transcription of DNA into RNA using the four ribonucleoside triphosphates as substrates. Associates with POLR2G. The chain is DNA-directed RNA polymerase II subunit Rpb4 from Drosophila melanogaster (Fruit fly).